The sequence spans 691 residues: Ribonuclease J (691 aa).

Positions 1–89 (MTDNNHYENN…TRNYAKEELD (89 aa)) are disordered. The segment at 1-132 (MTDNNHYENN…KIQVEHLNPH (132 aa)) is loss of region decreases protein stability, still able to interact with RhpA, but has decreased RNase activity even on ssRNA. The segment covering 10-19 (NESNENSSEN) has biased composition (low complexity). A compositionally biased stretch (basic and acidic residues) spans 41–57 (RENAQKNGESSHHEAPS). Residues 58–82 (HHKKEHRPNKKPNNHHKQKHAKTRN) are compositionally biased toward basic residues. N6-acetyllysine occurs at positions 134 and 140. Residues His-208, His-210, Asp-212, His-213, His-277, and Asp-299 each contribute to the Zn(2+) site. Lys-323, Lys-337, and Lys-397 each carry N6-acetyllysine. 500-504 (HVSGH) contacts substrate. Position 511 is an N6-acetyllysine (Lys-511). His-526 is a binding site for Zn(2+). Lys-547, Lys-634, and Lys-649 each carry N6-acetyllysine.

It belongs to the metallo-beta-lactamase superfamily. RNA-metabolizing metallo-beta-lactamase-like family. Bacterial RNase J subfamily. Homodimer. Homotetramer; dimer of homodimers. Interacts with RNA helicase RphA, might be a member of a minimal RNA degradosome complex. Zn(2+) is required as a cofactor. In terms of processing, acetylated on nine lysine residues. Some of the residues are acetylated by multiple different mechanisms. RimL is partially responsible for the acetylation of Lys-323, Lys-397 and Lys-649. HPB8_1270 homolog is partially responsible for the acetylation of Lys-323, Lys-397, Lys-511 and Lys-649. Acetyl-phosphate-mediated non-enzymatic acetylation pathway takes part in the acetylation of Lys-134, Lys-323, Lys-397, Lys-511 and Lys-649. Acetylation of the remaining residues Lys-140, Lys-337, Lys-547 and Lys-634 occurs by a yet undetermined mechanism. Acetylation on a number of these residues is important for growth regulation and proper cell morphology.

The protein localises to the cytoplasm. Its activity is regulated as follows. Catalytic activity is regulated by the balance between homodimers and homotetramers, with homotetramers being the active forms of this enzyme. Acetylation allosterically regulates the homooligomerization state and hence the catalytic activity. Its function is as follows. An RNase that has 5'-3' exoribonuclease and endoribonuclease activity. Degrades 5'-monophosphorylated ssRNA and dsRNA, considerably more active on ssRNA. Association with RhpA significantly increases the dsRNase activity. Degrades RNA substrate with hairpin structures at both ends with low activity, but presence of RhpA significantly increases the activity on this substrate. Stimulates ATPase activity of RNA helicase RhpA. Involved in stabilization of mRNA but apparently not rRNA. The sequence is that of Ribonuclease J from Helicobacter pylori (strain B128).